The chain runs to 337 residues: Large ribosomal subunit protein uL3 (337 aa).

The disordered stretch occupies residues 1 to 20; the sequence is MASIHRPKRGSLAFSPRKRA.

Belongs to the universal ribosomal protein uL3 family. In terms of assembly, part of the 50S ribosomal subunit. Forms a cluster with proteins L14 and L24e.

In terms of biological role, one of the primary rRNA binding proteins, it binds directly near the 3'-end of the 23S rRNA, where it nucleates assembly of the 50S subunit. This Methanosarcina mazei (strain ATCC BAA-159 / DSM 3647 / Goe1 / Go1 / JCM 11833 / OCM 88) (Methanosarcina frisia) protein is Large ribosomal subunit protein uL3.